Consider the following 71-residue polypeptide: uncharacterized protein (71 aa).

The segment covering 1–10 (MHRKKRKKEK) has biased composition (basic residues). Residues 1–20 (MHRKKRKKEKKRTEKDNTTN) are disordered. The chain crosses the membrane as a helical span at residues 21–43 (LPPLFLFPCSLSLPTLLAPVHYI).

Its subcellular location is the membrane. This is an uncharacterized protein from Saccharomyces cerevisiae (strain ATCC 204508 / S288c) (Baker's yeast).